The sequence spans 158 residues: Cyclic pyranopterin monophosphate synthase (158 aa).

Residues 73–75 and 110–111 each bind substrate; these read LCH and ME. The active site involves Asp-125.

It belongs to the MoaC family. As to quaternary structure, homohexamer; trimer of dimers.

It carries out the reaction (8S)-3',8-cyclo-7,8-dihydroguanosine 5'-triphosphate = cyclic pyranopterin phosphate + diphosphate. Its pathway is cofactor biosynthesis; molybdopterin biosynthesis. Its function is as follows. Catalyzes the conversion of (8S)-3',8-cyclo-7,8-dihydroguanosine 5'-triphosphate to cyclic pyranopterin monophosphate (cPMP). The polypeptide is Cyclic pyranopterin monophosphate synthase (Azotobacter vinelandii (strain DJ / ATCC BAA-1303)).